Consider the following 119-residue polypeptide: MYLLGHIIGWLWLMLTVAIGLSRHSVKSANRFLILSRIGYLLIIITGVALAIRTLSGNWWLTLLKVILGLGTIGLIEVAFARKQESHLNSGLVTLLVCGTLLTIICGIGLHWQLTGNLI.

The next 4 membrane-spanning stretches (helical) occupy residues 1–21 (MYLL…AIGL), 32–52 (FLIL…ALAI), 60–80 (WLTL…EVAF), and 92–112 (LVTL…GLHW).

Belongs to the UPF0344 family.

Its subcellular location is the cell membrane. The protein is UPF0344 protein lp_1373 of Lactiplantibacillus plantarum (strain ATCC BAA-793 / NCIMB 8826 / WCFS1) (Lactobacillus plantarum).